The chain runs to 349 residues: Histidinol-phosphate aminotransferase (349 aa).

At Lys210 the chain carries N6-(pyridoxal phosphate)lysine.

Belongs to the class-II pyridoxal-phosphate-dependent aminotransferase family. Histidinol-phosphate aminotransferase subfamily. In terms of assembly, homodimer. The cofactor is pyridoxal 5'-phosphate.

It catalyses the reaction L-histidinol phosphate + 2-oxoglutarate = 3-(imidazol-4-yl)-2-oxopropyl phosphate + L-glutamate. It functions in the pathway amino-acid biosynthesis; L-histidine biosynthesis; L-histidine from 5-phospho-alpha-D-ribose 1-diphosphate: step 7/9. The chain is Histidinol-phosphate aminotransferase from Flavobacterium johnsoniae (strain ATCC 17061 / DSM 2064 / JCM 8514 / BCRC 14874 / CCUG 350202 / NBRC 14942 / NCIMB 11054 / UW101) (Cytophaga johnsonae).